Here is a 244-residue protein sequence, read N- to C-terminus: MKIDLNADLGEGYASDAELLTLVSSANIACGFHAGDAQTMQACVREAIKNGVAIGAHPSFPDRENFGRRAMQLPPETVYAQTLYQIGALAAITRAQGGVMCHVKPHGMLYNQAAKEAQLADAIARAVYACDPALILVGLAGSELIRAGKQYGLTTREEVFADRGYQADGSLVPRSQPGALIENEEQALEQTLEMVQHGRVKSITGEWATVTAQTVCLHGDGEHALAFARRLRSTFAEKGIVVAA.

This sequence belongs to the LamB/PxpA family. In terms of assembly, forms a complex composed of PxpA, PxpB and PxpC.

It carries out the reaction 5-oxo-L-proline + ATP + 2 H2O = L-glutamate + ADP + phosphate + H(+). In terms of biological role, catalyzes the cleavage of 5-oxoproline to form L-glutamate coupled to the hydrolysis of ATP to ADP and inorganic phosphate. The chain is 5-oxoprolinase subunit A from Escherichia coli O17:K52:H18 (strain UMN026 / ExPEC).